We begin with the raw amino-acid sequence, 89 residues long: Small ribosomal subunit protein bS16 (89 aa).

This sequence belongs to the bacterial ribosomal protein bS16 family.

The sequence is that of Small ribosomal subunit protein bS16 from Chloroflexus aggregans (strain MD-66 / DSM 9485).